The sequence spans 190 residues: CASP-like protein 1E2 (190 aa).

The span at 1–12 shows a compositional bias: low complexity; it reads MENEGKNNMNGM. The interval 1–24 is disordered; it reads MENEGKNNMNGMEMEKGKRESRSR. The Cytoplasmic segment spans residues 1-28; it reads MENEGKNNMNGMEMEKGKRESRSRKGVE. A compositionally biased stretch (basic and acidic residues) spans 13–24; sequence EMEKGKRESRSR. A helical membrane pass occupies residues 29–49; the sequence is LTMRVLALVLTMAAATVLGVA. The Extracellular portion of the chain corresponds to 50-83; that stretch reads KQTKVVSIKLIPALPPLDITTTAKASYLSAFVYN. The chain crosses the membrane as a helical span at residues 84 to 104; that stretch reads ISANAIACGYTAISIAILMIS. The Cytoplasmic portion of the chain corresponds to 105 to 111; that stretch reads RGRRSKK. A helical transmembrane segment spans residues 112-132; it reads LLMAVLLGDLVMVALLFSGTG. Residues 133 to 163 lie on the Extracellular side of the membrane; it reads AASAIGLMGLQGNKHVMWNKVCGVFGKFCHR. The helical transmembrane segment at 164–184 threads the bilayer; that stretch reads AAPSLPLTFLAAVVFMFLVVL. Topologically, residues 185–190 are cytoplasmic; sequence DAIKLP.

This sequence belongs to the Casparian strip membrane proteins (CASP) family. In terms of assembly, homodimer and heterodimers.

The protein localises to the cell membrane. The chain is CASP-like protein 1E2 from Arabidopsis lyrata subsp. lyrata (Lyre-leaved rock-cress).